Reading from the N-terminus, the 290-residue chain is Eukaryotic translation initiation factor 3 subunit G (290 aa).

Basic and acidic residues predominate over residues 1 to 12 (MADSKQSNRDWA). Disordered regions lie at residues 1 to 30 (MADS…STDA) and 173 to 192 (AGET…ATGA). The region spanning 204-285 (PTLRVTSLSI…LILEVAWSQP (82 aa)) is the RRM domain.

Belongs to the eIF-3 subunit G family. Component of the eukaryotic translation initiation factor 3 (eIF-3) complex.

Its subcellular location is the cytoplasm. In terms of biological role, RNA-binding component of the eukaryotic translation initiation factor 3 (eIF-3) complex, which is involved in protein synthesis of a specialized repertoire of mRNAs and, together with other initiation factors, stimulates binding of mRNA and methionyl-tRNAi to the 40S ribosome. The eIF-3 complex specifically targets and initiates translation of a subset of mRNAs involved in cell proliferation. This subunit can bind 18S rRNA. The sequence is that of Eukaryotic translation initiation factor 3 subunit G from Cryptococcus neoformans var. neoformans serotype D (strain B-3501A) (Filobasidiella neoformans).